The sequence spans 152 residues: Endoribonuclease YbeY (152 aa).

Positions 113, 117, and 123 each coordinate Zn(2+).

It belongs to the endoribonuclease YbeY family. It depends on Zn(2+) as a cofactor.

Its subcellular location is the cytoplasm. In terms of biological role, single strand-specific metallo-endoribonuclease involved in late-stage 70S ribosome quality control and in maturation of the 3' terminus of the 16S rRNA. The protein is Endoribonuclease YbeY of Delftia acidovorans (strain DSM 14801 / SPH-1).